Here is a 702-residue protein sequence, read N- to C-terminus: Elongation factor G (702 aa).

One can recognise a tr-type G domain in the interval 8-290 (SRYRNIGISA…AVIEYLPSPT (283 aa)). GTP-binding positions include 17–24 (AHIDAGKT), 88–92 (DTPGH), and 142–145 (NKMD).

This sequence belongs to the TRAFAC class translation factor GTPase superfamily. Classic translation factor GTPase family. EF-G/EF-2 subfamily.

It is found in the cytoplasm. Its function is as follows. Catalyzes the GTP-dependent ribosomal translocation step during translation elongation. During this step, the ribosome changes from the pre-translocational (PRE) to the post-translocational (POST) state as the newly formed A-site-bound peptidyl-tRNA and P-site-bound deacylated tRNA move to the P and E sites, respectively. Catalyzes the coordinated movement of the two tRNA molecules, the mRNA and conformational changes in the ribosome. This chain is Elongation factor G, found in Edwardsiella ictaluri (strain 93-146).